The primary structure comprises 295 residues: Ornithine carbamoyltransferase, catabolic (295 aa).

Carbamoyl phosphate is bound by residues serine 49–threonine 52, glutamine 76, arginine 100, and histidine 127–glutamine 130. Residues asparagine 155, aspartate 213, and serine 217–methionine 218 each bind L-ornithine. Carbamoyl phosphate is bound by residues cysteine 253–leucine 254 and arginine 281.

The protein belongs to the aspartate/ornithine carbamoyltransferase superfamily. OTCase family. As to quaternary structure, homohexamer.

It is found in the cytoplasm. The catalysed reaction is carbamoyl phosphate + L-ornithine = L-citrulline + phosphate + H(+). It participates in amino-acid degradation; L-arginine degradation via ADI pathway; carbamoyl phosphate from L-arginine: step 2/2. With respect to regulation, arginine lead to a slight activation. Inhibited by all nucleotide phosphates. Its function is as follows. Reversibly catalyzes the transfer of the carbamoyl group from carbamoyl phosphate (CP) to the N(epsilon) atom of ornithine (ORN) to produce L-citrulline. In Halobacterium salinarum (strain ATCC 700922 / JCM 11081 / NRC-1) (Halobacterium halobium), this protein is Ornithine carbamoyltransferase, catabolic (arcB).